Here is a 766-residue protein sequence, read N- to C-terminus: Serine/threonine-protein kinase DCLK2 (766 aa).

The tract at residues 1–45 (MASTRSIELEHFEERDKRPRPGSRRGAPSSSGGSSSSGPKGNGLI) is disordered. Residues 7-19 (IELEHFEERDKRP) show a composition bias toward basic and acidic residues. Residues 24 to 39 (RRGAPSSSGGSSSSGP) show a composition bias toward low complexity. At Thr61 the chain carries Phosphothreonine. Doublecortin domains are found at residues 72–158 (KKAR…VDYT) and 197–280 (KLVT…AQDD). Low complexity-rich tracts occupy residues 300-312 (AVKY…PGPS) and 324-347 (TPSS…SPGS). Positions 300–378 (AVKYSGSKSP…ELDRCISPEG (79 aa)) are disordered. Ser362 carries the post-translational modification Phosphoserine. One can recognise a Protein kinase domain in the interval 394–651 (YKIGKVIGDG…AGQILSHPWV (258 aa)). ATP is bound by residues 400-408 (IGDGNFAVV) and Lys423. Asp515 functions as the Proton acceptor in the catalytic mechanism. The residue at position 647 (Ser647) is a Phosphoserine. Position 666 is a phosphothreonine (Thr666). The interval 707–766 (CQDSGRPGMEPISPVPPSVEEIPVPGEAVPAPTPPESPTPHPPPAAPGGERAGTWRRHRD) is disordered. The span at 724-736 (SVEEIPVPGEAVP) shows a compositional bias: low complexity. Residues 737–752 (APTPPESPTPHPPPAA) show a composition bias toward pro residues.

Belongs to the protein kinase superfamily. CAMK Ser/Thr protein kinase family. CaMK subfamily. As to quaternary structure, binds to and stabilizes microtubules. Interacts with MAPK8IP1/JIP-1, MAPK8IP2/JIP-2, MAPK9/JNK2, PPP1R9B/NEURABIN-2 and actin. Autophosphorylated. In terms of tissue distribution, expressed in the brain, heart and eyes.

The protein resides in the cytoplasm. The protein localises to the cytoskeleton. It catalyses the reaction L-seryl-[protein] + ATP = O-phospho-L-seryl-[protein] + ADP + H(+). The catalysed reaction is L-threonyl-[protein] + ATP = O-phospho-L-threonyl-[protein] + ADP + H(+). In terms of biological role, protein kinase with a significantly reduced C(a2+)/CAM affinity and dependence compared to other members of the CaMK family. May play a role in the down-regulation of CRE-dependent gene activation probably by phosphorylation of the CREB coactivator CRTC2/TORC2 and the resulting retention of TORC2 in the cytoplasm. The chain is Serine/threonine-protein kinase DCLK2 (DCLK2) from Homo sapiens (Human).